Consider the following 1217-residue polypeptide: Rho family-interacting cell polarization regulator 1 (1217 aa).

Ser22 bears the Phosphoserine mark. Positions 83–112 form a coiled coil; it reads RGLTAYLEVHQQEQEKLQRQIKESKRNSRL. 2 positions are modified to phosphoserine: Ser345 and Ser347. Thr351 is modified (phosphothreonine). The tract at residues 371–413 is disordered; that stretch reads NGTAWSLSSESSDDSSSPQLSGTARYSSTPKPLVQQPEPLPVQ. Composition is skewed to low complexity over residues 376-391 and 400-413; these read SLSS…PQLS and PKPL…LPVQ. Ser452 and Ser455 each carry phosphoserine. The interval 565 to 762 is disordered; it reads TSTTVGSTHK…SPSSIVPEPQ (198 aa). The segment covering 579–594 has biased composition (polar residues); sequence PLTSTGSIPSVTDSIQ. Residues 595 to 649 are compositionally biased toward low complexity; sequence TTTSPTHTTPSPTHTTVSPTHSTPSPTHTTVSPSNAALSPSNATPSLSHSTTSPT. The segment covering 650 to 661 has biased composition (polar residues); that stretch reads QKATMSTHTTSA. The span at 664-695 shows a compositional bias: low complexity; sequence PVQTTTSPISTTVSPSPSVDTAIISSSSAVPS. Residues 720–729 are compositionally biased toward polar residues; it reads ACTSSPSLAS. Ser742 bears the Phosphoserine mark. Residues 786-828 are a coiled coil; that stretch reads RRLEEALRTLMAALDDYRGQFPELQGLEQEVTRLESLLMQRQG. The disordered stretch occupies residues 850 to 874; sequence FLNDDEDEDNDSPGDRPTSSPEVVA. The segment covering 852–861 has biased composition (acidic residues); sequence NDDEDEDNDS. Phosphoserine is present on residues Ser868 and Ser869.

The protein belongs to the RIPOR family. As to quaternary structure, interacts (via N-terminus) with RHOA (GTP-bound form); this interaction links active RHOA to STK24 and STK26 kinases. Interacts with RHOB. Interacts with RHOC. Interacts (via C-terminus) with PDCD10; this interaction occurs in a Rho-independent manner. Interacts (via C-terminus) with STK24; this interaction occurs in a PDCD10-dependent and Rho-independent manner. Interacts (via C-terminus) with STK26; this interaction occurs in a PDCD10-dependent and Rho-independent manner. Interacts (via N-terminus) with 14-3-3 proteins; these interactions occur in a Rho-dependent manner.

The protein resides in the cytoplasm. It is found in the golgi apparatus. Downstream effector protein for Rho-type small GTPases that plays a role in cell polarity and directional migration. Acts as an adapter protein, linking active Rho proteins to STK24 and STK26 kinases, and hence positively regulates Golgi reorientation in polarized cell migration upon Rho activation. Involved in the subcellular relocation of STK26 from the Golgi to cytoplasm punctae in a Rho- and PDCD10-dependent manner upon serum stimulation. The protein is Rho family-interacting cell polarization regulator 1 of Rattus norvegicus (Rat).